We begin with the raw amino-acid sequence, 1332 residues long: Abscisic-aldehyde oxidase (1332 aa).

The region spanning 1–88 is the 2Fe-2S ferredoxin-type domain; sequence MDLEFAVNGE…GCSITTSEGL (88 aa). Residues cysteine 40, cysteine 45, and cysteine 48 each coordinate [2Fe-2S] cluster. The 182-residue stretch at 219–400 folds into the FAD-binding PCMH-type domain; that stretch reads SDHLKYRWTT…LKVEIPSWTA (182 aa).

It belongs to the xanthine dehydrogenase family. Aldehyde oxidases (AO) are homodimers and heterodimers of AO subunits. AO-delta is a AAO3 homodimer. AAO3 also forms a dimer with AAO2. Interacts with PUB44, and this interaction probably results in targeting of this protein to the proteasome. [2Fe-2S] cluster is required as a cofactor. It depends on FAD as a cofactor. Requires Mo-molybdopterin as cofactor. As to expression, expressed in vascular tissues of all organs, particularly in phloem companion cells and xylem parenchymatic cells. Highly expressed in roots and rosettes, and to lower extent in seedlings, stems and flowers. Expressed at very low levels in siliques and dry seeds. Also detected in root dividing cells (tips and primordia), in mesophyll cells and inside the guard cells.

The protein resides in the cytoplasm. The catalysed reaction is 2-cis-(+)-abscisic aldehyde + O2 + H2O = 2-cis-(+)-abscisate + H2O2 + H(+). It carries out the reaction 1-naphthaldehyde + O2 + H2O = 1-naphthoate + H2O2 + H(+). It catalyses the reaction indole-3-acetaldehyde + O2 + H2O = (indol-3-yl)acetate + H2O2 + H(+). In higher plants aldehyde oxidases (AO) appear to be homo- and heterodimeric assemblies of AO subunits with probably different physiological functions. AO-delta may be involved in the last step of abscisic acid biosynthesis, at least in leaves and seeds. In vitro, AO-delta oxidizes abscisic aldehyde to abscisic acid (ABA). In vitro, AO-delta also uses 1-naphthaldehyde, indole-3-aldehyde (IAld), benzaldehyde and cinnamaldehyde as substrate; the AAO2-AAO3 dimer also uses abscisic aldehyde as substrate. The protein is Abscisic-aldehyde oxidase (AAO3) of Arabidopsis thaliana (Mouse-ear cress).